A 229-amino-acid polypeptide reads, in one-letter code: Cell division topological specificity factor homolog, chloroplastic (229 aa).

Residues 1–30 (MAMSSGTLRISATLVSPYHHHHRNRLSLPS) constitute a chloroplast transit peptide. The interaction with MIND1 stretch occupies residues 35–141 (VDFTGFISNG…KMILFSDRCD (107 aa)). The homodimerization stretch occupies residues 142-169 (VSDEAKRKIVNNIIHALSDFVEIESEEK).

Belongs to the MinE family. As to quaternary structure, homodimer. Interacts with MIND1. These interactions are required for proper intraplastidic localization. Binds to ARC3. Expressed in green tissues, especially at the shoot apex. Also present in leaves, stems, buds, and flowers, especially in sepals, siliques (tip and base), and anthers (mostly in pollen grains).

Its subcellular location is the plastid. It is found in the chloroplast. Acts as a topological specificity factor during plastid division and specify plastid constriction sites (such as the Z-ring) in a MCD1-dependent manner. Especially involved in epidermal plastids division in a FTSZ1-dependent manner. Required for the proper formation of FtsZ rings at the division site in nongreen plastids (e.g. etioplasts). May contribute to gravitropism in stems and hypocotyls. Stimulates MIND1 ATPase activity. In cooperation with MIND1, prevents FtsZ ring formation anywhere outside of the mid-plastids. The chain is Cell division topological specificity factor homolog, chloroplastic from Arabidopsis thaliana (Mouse-ear cress).